We begin with the raw amino-acid sequence, 376 residues long: MTRLLLALILVVSAASAQAAVRIKDIADIKGLRENQIVGYGLVIGLNGTGDTLRNAPFTEQSLQSMLENMGINVRNETTSTTNPARPTTLRTRNVAAVMVTADLQPSIGAGERMDVTVSSLGDATSLLGGTLVMTSLRAADGAVYAVAQGAVTVAGYSVGGQAQNVSQGTPTAGRILNGALVEREVQGSLHEMEFLVLELKNPDFVTATRILDAINRYAGGRYRAQIAFERDYRTIVLSKPRHIGPVRFLAEIGELTVEPDTPARVVINERTGTVVIGRDVRISTVAVTHGNLTVRVTEMPVVSQPAPFSRGQTVVVPQTVVEANEAGSQVAILSGVDLQRLVRGLNQIGLKPSGIIAILQAIKTAGALQADVIVQ.

A signal peptide spans M1–A19.

Belongs to the FlgI family. As to quaternary structure, the basal body constitutes a major portion of the flagellar organelle and consists of four rings (L,P,S, and M) mounted on a central rod.

It is found in the periplasm. Its subcellular location is the bacterial flagellum basal body. Functionally, assembles around the rod to form the L-ring and probably protects the motor/basal body from shearing forces during rotation. The chain is Flagellar P-ring protein 2 from Bradyrhizobium diazoefficiens (strain JCM 10833 / BCRC 13528 / IAM 13628 / NBRC 14792 / USDA 110).